The sequence spans 156 residues: Arginine repressor (156 aa).

This sequence belongs to the ArgR family.

It localises to the cytoplasm. It functions in the pathway amino-acid biosynthesis; L-arginine biosynthesis [regulation]. Its function is as follows. Regulates arginine biosynthesis genes. This chain is Arginine repressor, found in Aliivibrio fischeri (strain ATCC 700601 / ES114) (Vibrio fischeri).